Reading from the N-terminus, the 206-residue chain is GTP-binding protein Rho3 (206 aa).

24-31 contacts GTP; sequence GDGACGKT. An Effector region motif is present at residues 46 to 54; the sequence is YEPTVFENY. Residues 71 to 75 and 129 to 132 contribute to the GTP site; these read DTAGQ and SKCD. Cys-203 is modified (cysteine methyl ester). Residue Cys-203 is the site of S-geranylgeranyl cysteine attachment. The propeptide at 204–206 is removed in mature form; that stretch reads CVM.

This sequence belongs to the small GTPase superfamily. Rho family.

Its subcellular location is the cell membrane. The polypeptide is GTP-binding protein Rho3 (RHO3) (Schizophyllum commune (Split gill fungus)).